Here is a 243-residue protein sequence, read N- to C-terminus: Probable transcriptional regulatory protein LGAS_1276 (243 aa).

Residues 1-22 are disordered; that stretch reads MSGHSKWHNIQGRKNAQDAKRG.

The protein belongs to the TACO1 family.

The protein resides in the cytoplasm. This chain is Probable transcriptional regulatory protein LGAS_1276, found in Lactobacillus gasseri (strain ATCC 33323 / DSM 20243 / BCRC 14619 / CIP 102991 / JCM 1131 / KCTC 3163 / NCIMB 11718 / NCTC 13722 / AM63).